We begin with the raw amino-acid sequence, 159 residues long: Fimbrial protein MyfA (159 aa).

The N-terminal stretch at 1–29 (MNMKKFVKKPLAIAVLMLASGGMVNMVHA) is a signal peptide.

In terms of assembly, forms a homomer composed of subunits assembled in a large structure resistant to proteases and chaotropic agents.

The protein resides in the fimbrium. Major pilus subunit. Expressed only in pathogenic serotypes, it is part of myf, a probable virulence factor. This chain is Fimbrial protein MyfA (myfA), found in Yersinia enterocolitica.